The following is a 225-amino-acid chain: Helicostatins (225 aa).

An N-terminal signal peptide occupies residues methionine 1–cysteine 18. Positions alanine 19–alanine 48 are excised as a propeptide. Leucine amide occurs at positions 58, 79, and 90. A propeptide spanning residues serine 94–glutamate 127 is cleaved from the precursor. Leucine 137 is subject to Leucine amide. The propeptide occupies phenylalanine 141–glutamate 149. Leucine amide occurs at positions 159, 170, 181, 192, and 206. The disordered stretch occupies residues glycine 205–valine 225. Positions serine 210–valine 225 are excised as a propeptide. Positions valine 214 to valine 225 are enriched in acidic residues.

The protein belongs to the allatostatin family. Highly expressed in the CNS and gut of larvae. Also expressed in the cells of the larval brain and ventral nerve cord and in endocrine cells of the midgut.

The protein localises to the secreted. Functionally, may act as a neurotransmitter or neuromodulator. This chain is Helicostatins, found in Helicoverpa armigera (Cotton bollworm).